A 548-amino-acid chain; its full sequence is Natural resistance-associated macrophage protein 1 (548 aa).

Residues 1–38 form a disordered region; sequence MSGDTGPPKQGGTRYGSISSPPSPEPQQAPPGGTYLSE. The Cytoplasmic portion of the chain corresponds to 1–55; that stretch reads MSGDTGPPKQGGTRYGSISSPPSPEPQQAPPGGTYLSEKIPIPDTESGTFSLRKL. Residues 56–73 form a helical membrane-spanning segment; the sequence is WAFTGPGFLMSIAFLDPG. Residues 74-82 are Extracellular-facing; the sequence is NIESDLQAG. The helical transmembrane segment at 83-102 threads the bilayer; it reads AVAGFKLLWVLLWATVLGLL. The Cytoplasmic portion of the chain corresponds to 103-139; sequence CQRLAARLGVVTGKDLGEVCHLYYPKVPRILLWLTIE. The chain crosses the membrane as a helical span at residues 140 to 160; it reads LAIVGSDMQEVIGTAIAFSLL. Residues 161 to 164 are Extracellular-facing; it reads SAGR. The chain crosses the membrane as a helical span at residues 165-184; that stretch reads IPLWGGVLITIVDAFFFLFL. Residues 185-193 lie on the Cytoplasmic side of the membrane; it reads DNYGLRKLE. The chain crosses the membrane as a helical span at residues 194–214; that stretch reads AFFGFLITIMALTFGYEYVVA. Topologically, residues 215 to 237 are extracellular; it reads QPAQGALLQGLFLPSCPGCGQPE. Residues 238 to 256 form a helical membrane-spanning segment; that stretch reads LLQAVGIIGAIIMPHNIYL. The Cytoplasmic segment spans residues 257–284; the sequence is HSSLVKSREVDRSRRADIREANMYFLIE. The chain crosses the membrane as a helical span at residues 285–304; sequence ATIALSVSFLINLFVMAVFG. The Extracellular segment spans residues 305 to 346; sequence QAFYKQTNQAAFNICANSSLQDYAPIFPRNNLTVAVDIYQGG. Asn321 and Asn335 each carry an N-linked (GlcNAc...) asparagine glycan. The helical transmembrane segment at 347 to 366 threads the bilayer; it reads VILGCLFGPAALYIWAVGLL. Residues 367–397 lie on the Cytoplasmic side of the membrane; it reads AAGQSSTMTGTYAGQFVMEGFLKLRWSRFAR. A helical transmembrane segment spans residues 398–415; it reads VLLTRSCAILPTVLLAVF. Topologically, residues 416–426 are extracellular; that stretch reads RDLRDLSGLND. A helical membrane pass occupies residues 427-447; that stretch reads LLNVLQSLLLPFAVLPILTFT. Topologically, residues 448–463 are cytoplasmic; the sequence is SMPALMREFANGLVSK. Residues 464 to 485 form a helical membrane-spanning segment; sequence VITSSIMVLVCAVNLYFVISYV. At 486 to 493 the chain is on the extracellular side; sequence PSLPHPAY. Residues 494–513 traverse the membrane as a helical segment; the sequence is FSLVALLAAAYLGLTTYLVW. At 514–548 the chain is on the cytoplasmic side; it reads TCLITQGATLLAHSSHQRFLYGLPEEDQEKGRTSG.

Belongs to the NRAMP family.

Its subcellular location is the late endosome membrane. The protein localises to the lysosome membrane. The catalysed reaction is Zn(2+)(in) + H(+)(out) = Zn(2+)(out) + H(+)(in). It carries out the reaction Fe(2+)(in) + H(+)(out) = Fe(2+)(out) + H(+)(in). It catalyses the reaction Mn(2+)(in) + H(+)(out) = Mn(2+)(out) + H(+)(in). In terms of biological role, macrophage-specific antiporter that fluxes metal ions in either direction against a proton gradient. Localized to late endosomal lysosomal membranes, delivers bivalent cations from the cytosol into these acidic compartments where they may directly affect antimicrobial activity. Involved in iron metabolism and host natural resistance to infection with intracellular parasites. Pathogen resistance involves sequestration of Fe(2+) and Mn(2+), cofactors of both prokaryotic and eukaryotic catalases and superoxide dismutases, not only to protect the macrophage against its own generation of reactive oxygen species, but to deny the cations to the pathogen for synthesis of its protective enzymes. The polypeptide is Natural resistance-associated macrophage protein 1 (SLC11A1) (Bison bison (American bison)).